The sequence spans 1419 residues: Multidrug resistance protein 1 (1419 aa).

The segment at 1 to 37 is r domain; regulates transporter activity; it reads MGKEQKEKKDGNLSIKEEVEKELNKKSTAELFRKIKN. Residues 1–60 lie on the Cytoplasmic side of the membrane; it reads MGKEQKEKKDGNLSIKEEVEKELNKKSTAELFRKIKNEKISFFLPFKCLPAQHRKLLFIS. The ABC transmembrane type-1 1 domain occupies 58–345; that stretch reads FISFVCAVLS…ILPNITEYMK (288 aa). A helical membrane pass occupies residues 61-81; it reads FVCAVLSGGTLPFFISVFGVI. Over 82-90 the chain is Vacuolar; it reads LKNMNLGDD. The helical transmembrane segment at 91–111 threads the bilayer; sequence INPIILSLVSIGLVQFILSMI. Over 112–168 the chain is Cytoplasmic; sequence SSYCMDVITSKILKTLKLEYLRSVFYQDGQFHDNNPGSKLRSDLDFYLEQVSSGIGT. A helical transmembrane segment spans residues 169–189; that stretch reads KFITIFTYASSFLGLYIWSLI. Topologically, residues 190–191 are vacuolar; the sequence is KN. The helical transmembrane segment at 192-212 threads the bilayer; that stretch reads ARLTLCITCVFPLIYVCGVIC. Residues 213-275 lie on the Cytoplasmic side of the membrane; the sequence is NKKVKLNKKT…KYILKANFVE (63 aa). The helical transmembrane segment at 276-296 threads the bilayer; the sequence is ALHIGLINGLILVSYAFGFWY. Topologically, residues 297–316 are vacuolar; sequence GTRIIINSATNQYPNNDFNG. Residues 317-337 traverse the membrane as a helical segment; that stretch reads ASVISILLGVLISMFMLTIIL. Residues 338 to 788 lie on the Cytoplasmic side of the membrane; that stretch reads PNITEYMKAL…YKEIFSYKKD (451 aa). Residues 378–662 enclose the ABC transporter 1 domain; the sequence is IEFKNVRFHY…NNNNNNNNNK (285 aa). Positions 387, 389, 390, 415, 417, 418, 419, 420, 421, 462, 562, 564, 566, and 567 each coordinate ATP. Mg(2+) is bound at residue Gln462. Disordered stretches follow at residues 639 to 665 and 697 to 752; these read ERSD…KINN and SSNK…TAEN. Low complexity-rich tracts occupy residues 643–665 and 697–715; these read NNNN…KINN and SSNK…NKSS. Over residues 723 to 749 the composition is skewed to polar residues; it reads GNDADNMNSLSIHENENISNNRNCKNT. Residues 789-809 traverse the membrane as a helical segment; it reads VTIIFFSILVAGGLYPVFALL. In terms of domain architecture, ABC transmembrane type-1 2 spans 791–1083; that stretch reads IIFFSILVAG…GSYAGKLMSL (293 aa). The Vacuolar portion of the chain corresponds to 810-829; sequence YARYVSTLFDFANLEYNSNK. A helical transmembrane segment spans residues 830 to 850; it reads YSIYILLIAIAMFISETLKNY. At 851–907 the chain is on the cytoplasmic side; sequence YNNKIGEKVEKTMKRRLFENILYQEMSFFDQDKNTPGVLSAHINRDVHLLKTGLVNN. 2 helical membrane passes run 908 to 928 and 929 to 949; these read IVIF…SFYF and CPIV…VFAV. Topologically, residues 950 to 1032 are cytoplasmic; that stretch reads RARLTKSKEI…RIIVNAALWG (83 aa). A helical transmembrane segment spans residues 1033–1053; the sequence is FSQSAQLFINSFAYWFGSFLI. Over 1054–1057 the chain is Vacuolar; it reads KRGT. A helical membrane pass occupies residues 1058–1078; it reads ILVDDFMKSLFTFIFTGSYAG. The Cytoplasmic portion of the chain corresponds to 1079–1419; the sequence is KLMSLKGDSE…IYKKYVKLAK (341 aa). The 291-residue stretch at 1126 to 1416 folds into the ABC transporter 2 domain; it reads VDIKDVNFRY…QDGIYKKYVK (291 aa). The ATP site is built by Tyr1135, Arg1138, Thr1163, Gly1164, Gly1166, Lys1167, Ser1168, Thr1169, Gln1256, Leu1312, Ser1313, Gly1315, and Gln1316. Residue Ser1168 coordinates Mg(2+). Mg(2+) is bound at residue Gln1256.

Belongs to the ABC transporter superfamily. ABCB family. Multidrug resistance exporter (TC 3.A.1.201) subfamily.

The protein localises to the vacuole membrane. The enzyme catalyses ATP + H2O + xenobioticSide 1 = ADP + phosphate + xenobioticSide 2.. Functionally, energy-dependent efflux pump responsible for decreased drug accumulation in multidrug-resistant cells. Transports lumefantrine, mefloquine, chloroquine, quinine, quinidine, amodiaquine, piperaquine, dihydroartemisinin and quinacrine. This Plasmodium falciparum (isolate 3D7) protein is Multidrug resistance protein 1.